Consider the following 201-residue polypeptide: Large ribosomal subunit protein mL61 (201 aa).

The tract at residues 87-118 is disordered; that stretch reads RDDKDAKPSSTPFPTSSADGSSPAPKPAQGER. Polar residues predominate over residues 94 to 106; the sequence is PSSTPFPTSSADG.

It belongs to the mitochondrion-specific ribosomal protein mL61 family. Component of the mitochondrial large ribosomal subunit (mt-LSU). Mature N.crassa 74S mitochondrial ribosomes consist of a small (37S) and a large (54S) subunit. The 37S small subunit contains a 16S ribosomal RNA (16S mt-rRNA) and 32 different proteins. The 54S large subunit contains a 23S rRNA (23S mt-rRNA) and 42 different proteins.

The protein localises to the mitochondrion. In terms of biological role, component of the mitochondrial ribosome (mitoribosome), a dedicated translation machinery responsible for the synthesis of mitochondrial genome-encoded proteins, including at least some of the essential transmembrane subunits of the mitochondrial respiratory chain. The mitoribosomes are attached to the mitochondrial inner membrane and translation products are cotranslationally integrated into the membrane. In Neurospora crassa (strain ATCC 24698 / 74-OR23-1A / CBS 708.71 / DSM 1257 / FGSC 987), this protein is Large ribosomal subunit protein mL61 (mrp49).